We begin with the raw amino-acid sequence, 96 residues long: MKKRGGRTLWLVYIDLSVPRSRGRILPRSQAVNKPTLQEMVKALEALGYKYEVYPNKKYPPLWYDDRAQGYVVVKTDEKMRIIAAKVAEKIKQIRG.

Belongs to the SRP19 family. Part of the signal recognition particle protein translocation system, which is composed of SRP and FtsY. Archaeal SRP consists of a 7S RNA molecule of 300 nucleotides and two protein subunits: SRP54 and SRP19.

The protein localises to the cytoplasm. Involved in targeting and insertion of nascent membrane proteins into the cytoplasmic membrane. Binds directly to 7S RNA and mediates binding of the 54 kDa subunit of the SRP. The polypeptide is Signal recognition particle 19 kDa protein (Pyrobaculum arsenaticum (strain DSM 13514 / JCM 11321 / PZ6)).